Reading from the N-terminus, the 269-residue chain is F-box protein At5g52880 (269 aa).

One can recognise an F-box domain in the interval 109 to 155 (DIDIPSLPQDILIHIFSFLEISSLVSSAQVSRSWNQATHENSLWQSQ).

This is F-box protein At5g52880 from Arabidopsis thaliana (Mouse-ear cress).